The chain runs to 429 residues: N5-carboxyaminoimidazole ribonucleotide synthase (429 aa).

Residues lysine 117, lysine 157, 194-197, glutamate 202, and 280-281 each bind ATP; these read EERV and NE. Residues 121-310 enclose the ATP-grasp domain; sequence RQRLAAAGVA…QFEQHLRAVL (190 aa). Positions 406-429 are disordered; that stretch reads RASDDAVGVPPACGGRSDEEERRL.

It belongs to the PurK/PurT family. In terms of assembly, homodimer.

It carries out the reaction 5-amino-1-(5-phospho-beta-D-ribosyl)imidazole + hydrogencarbonate + ATP = 5-carboxyamino-1-(5-phospho-D-ribosyl)imidazole + ADP + phosphate + 2 H(+). It participates in purine metabolism; IMP biosynthesis via de novo pathway; 5-amino-1-(5-phospho-D-ribosyl)imidazole-4-carboxylate from 5-amino-1-(5-phospho-D-ribosyl)imidazole (N5-CAIR route): step 1/2. Its function is as follows. Catalyzes the ATP-dependent conversion of 5-aminoimidazole ribonucleotide (AIR) and HCO(3)(-) to N5-carboxyaminoimidazole ribonucleotide (N5-CAIR). The protein is N5-carboxyaminoimidazole ribonucleotide synthase of Mycobacterium bovis (strain ATCC BAA-935 / AF2122/97).